Reading from the N-terminus, the 428-residue chain is 3-phosphoshikimate 1-carboxyvinyltransferase (428 aa).

3-phosphoshikimate contacts are provided by Lys-21, Ser-22, and Arg-26. Lys-21 is a phosphoenolpyruvate binding site. Gly-93 and Arg-121 together coordinate phosphoenolpyruvate. 3-phosphoshikimate is bound by residues Ser-166, Gln-168, Asp-314, and Lys-341. Gln-168 lines the phosphoenolpyruvate pocket. Asp-314 (proton acceptor) is an active-site residue. 2 residues coordinate phosphoenolpyruvate: Arg-345 and Arg-388.

It belongs to the EPSP synthase family. Monomer.

It localises to the cytoplasm. It catalyses the reaction 3-phosphoshikimate + phosphoenolpyruvate = 5-O-(1-carboxyvinyl)-3-phosphoshikimate + phosphate. The protein operates within metabolic intermediate biosynthesis; chorismate biosynthesis; chorismate from D-erythrose 4-phosphate and phosphoenolpyruvate: step 6/7. Its function is as follows. Catalyzes the transfer of the enolpyruvyl moiety of phosphoenolpyruvate (PEP) to the 5-hydroxyl of shikimate-3-phosphate (S3P) to produce enolpyruvyl shikimate-3-phosphate and inorganic phosphate. The protein is 3-phosphoshikimate 1-carboxyvinyltransferase of Syntrophomonas wolfei subsp. wolfei (strain DSM 2245B / Goettingen).